The primary structure comprises 65 residues: MKLKITLTKSLIACRVNQIKTAHCLGLKKINNQVIKDDTPAIHGMIKTISHLVVVEKVSDTKEQK.

This sequence belongs to the universal ribosomal protein uL30 family. In terms of assembly, part of the 50S ribosomal subunit.

The polypeptide is Large ribosomal subunit protein uL30 (Onion yellows phytoplasma (strain OY-M)).